A 72-amino-acid polypeptide reads, in one-letter code: Translation initiation factor IF-1 (72 aa).

An S1-like domain is found at 1–72 (MSKEEAIEVE…SRGRITYRAK (72 aa)).

Belongs to the IF-1 family. As to quaternary structure, component of the 30S ribosomal translation pre-initiation complex which assembles on the 30S ribosome in the order IF-2 and IF-3, IF-1 and N-formylmethionyl-tRNA(fMet); mRNA recruitment can occur at any time during PIC assembly.

It localises to the cytoplasm. Its function is as follows. One of the essential components for the initiation of protein synthesis. Stabilizes the binding of IF-2 and IF-3 on the 30S subunit to which N-formylmethionyl-tRNA(fMet) subsequently binds. Helps modulate mRNA selection, yielding the 30S pre-initiation complex (PIC). Upon addition of the 50S ribosomal subunit IF-1, IF-2 and IF-3 are released leaving the mature 70S translation initiation complex. In Geobacter metallireducens (strain ATCC 53774 / DSM 7210 / GS-15), this protein is Translation initiation factor IF-1.